The sequence spans 351 residues: DNA polymerase IV (351 aa).

The 182-residue stretch at 4–185 folds into the UmuC domain; that stretch reads IIHVDMDCFF…LPLAKIPGVG (182 aa). Mg(2+) contacts are provided by Asp-8 and Asp-103. Glu-104 is an active-site residue.

The protein belongs to the DNA polymerase type-Y family. Monomer. It depends on Mg(2+) as a cofactor.

Its subcellular location is the cytoplasm. The enzyme catalyses DNA(n) + a 2'-deoxyribonucleoside 5'-triphosphate = DNA(n+1) + diphosphate. Poorly processive, error-prone DNA polymerase involved in untargeted mutagenesis. Copies undamaged DNA at stalled replication forks, which arise in vivo from mismatched or misaligned primer ends. These misaligned primers can be extended by PolIV. Exhibits no 3'-5' exonuclease (proofreading) activity. May be involved in translesional synthesis, in conjunction with the beta clamp from PolIII. This chain is DNA polymerase IV, found in Escherichia coli O1:K1 / APEC.